We begin with the raw amino-acid sequence, 302 residues long: Dihydroorotate dehydrogenase B (NAD(+)), catalytic subunit (302 aa).

FMN-binding positions include S23 and 47–48 (KG). Residues K47 and 71-75 (NSVGL) contribute to the substrate site. Residues N101 and N128 each coordinate FMN. N128 contributes to the substrate binding site. C131 acts as the Nucleophile in catalysis. The FMN site is built by K166 and I192. 193–194 (NT) contributes to the substrate binding site. FMN is bound by residues G218, 244-245 (GG), and 266-267 (GT).

It belongs to the dihydroorotate dehydrogenase family. Type 1 subfamily. Heterotetramer of 2 PyrK and 2 PyrD type B subunits. FMN serves as cofactor.

The protein localises to the cytoplasm. It catalyses the reaction (S)-dihydroorotate + NAD(+) = orotate + NADH + H(+). It participates in pyrimidine metabolism; UMP biosynthesis via de novo pathway; orotate from (S)-dihydroorotate (NAD(+) route): step 1/1. In terms of biological role, catalyzes the conversion of dihydroorotate to orotate with NAD(+) as electron acceptor. This chain is Dihydroorotate dehydrogenase B (NAD(+)), catalytic subunit (pyrD), found in Alkaliphilus metalliredigens (strain QYMF).